Here is a 272-residue protein sequence, read N- to C-terminus: Probable glutathione S-transferase DHAR2, chloroplastic (272 aa).

Residues 1–57 constitute a chloroplast transit peptide; it reads MAVLLRTTTSATTATSGGSSSATALLATTFRRGGRRLLLLPATRGSAPRRAALLTAR. Glutathione is bound by residues Lys-68 and Asp-79. L-ascorbate-binding residues include Lys-68 and Asp-79. One can recognise a GST N-terminal domain in the interval 70–148; that stretch reads SLTVPDRLGD…AIEEKYPEPS (79 aa). Cys-80 acts as the Nucleophile in catalysis. Glutathione contacts are provided by Lys-107, Val-120, Ser-133, His-219, and Trp-266. In terms of domain architecture, GST C-terminal spans 126–272; it reads EEQWVADSDV…IAGWRPKVMG (147 aa). Residue Lys-269 participates in L-ascorbate binding.

The protein belongs to the GST superfamily. DHAR family. As to quaternary structure, monomer.

The protein resides in the plastid. The protein localises to the chloroplast. The catalysed reaction is RX + glutathione = an S-substituted glutathione + a halide anion + H(+). The enzyme catalyses L-dehydroascorbate + 2 glutathione = glutathione disulfide + L-ascorbate. Its function is as follows. Involved in ascorbate homeostasis. Maintains redox pools of ascorbate by recycling dihydroascorbate (DHA) to ascorbate. Involved in scavenging reactive oxygen species (ROS) under oxidative stresses. In Oryza sativa subsp. japonica (Rice), this protein is Probable glutathione S-transferase DHAR2, chloroplastic.